A 297-amino-acid polypeptide reads, in one-letter code: UDP-3-O-acyl-N-acetylglucosamine deacetylase (297 aa).

Positions 79, 238, and 242 each coordinate Zn(2+). His-265 serves as the catalytic Proton donor.

It belongs to the LpxC family. It depends on Zn(2+) as a cofactor.

The catalysed reaction is a UDP-3-O-[(3R)-3-hydroxyacyl]-N-acetyl-alpha-D-glucosamine + H2O = a UDP-3-O-[(3R)-3-hydroxyacyl]-alpha-D-glucosamine + acetate. The protein operates within glycolipid biosynthesis; lipid IV(A) biosynthesis; lipid IV(A) from (3R)-3-hydroxytetradecanoyl-[acyl-carrier-protein] and UDP-N-acetyl-alpha-D-glucosamine: step 2/6. In terms of biological role, catalyzes the hydrolysis of UDP-3-O-myristoyl-N-acetylglucosamine to form UDP-3-O-myristoylglucosamine and acetate, the committed step in lipid A biosynthesis. The polypeptide is UDP-3-O-acyl-N-acetylglucosamine deacetylase (Blochmanniella pennsylvanica (strain BPEN)).